Here is a 253-residue protein sequence, read N- to C-terminus: 3-deoxy-manno-octulosonate cytidylyltransferase (253 aa).

It belongs to the KdsB family.

It is found in the cytoplasm. It catalyses the reaction 3-deoxy-alpha-D-manno-oct-2-ulosonate + CTP = CMP-3-deoxy-beta-D-manno-octulosonate + diphosphate. Its pathway is nucleotide-sugar biosynthesis; CMP-3-deoxy-D-manno-octulosonate biosynthesis; CMP-3-deoxy-D-manno-octulosonate from 3-deoxy-D-manno-octulosonate and CTP: step 1/1. The protein operates within bacterial outer membrane biogenesis; lipopolysaccharide biosynthesis. Its function is as follows. Activates KDO (a required 8-carbon sugar) for incorporation into bacterial lipopolysaccharide in Gram-negative bacteria. The polypeptide is 3-deoxy-manno-octulosonate cytidylyltransferase (Acidithiobacillus ferrooxidans (strain ATCC 23270 / DSM 14882 / CIP 104768 / NCIMB 8455) (Ferrobacillus ferrooxidans (strain ATCC 23270))).